The sequence spans 832 residues: Protein wech (832 aa).

Residues 1–14 (MMELLSNNSVPQQM) show a composition bias toward polar residues. The interval 1 to 42 (MMELLSNNSVPQQMASSNAPSANNVAHSSTANGSGGGSVSSN) is disordered. Low complexity predominate over residues 15–32 (ASSNAPSANNVAHSSTAN). S107 bears the Phosphoserine mark. 2 consecutive B box-type zinc fingers follow at residues 118–163 (NSSI…IVSL) and 184–224 (SGNF…YASI). Residues C123, C126, C145, H149, C189, H192, C211, and H216 each coordinate Zn(2+). A phosphoserine mark is found at S470, S475, and S506. NHL repeat units follow at residues 537 to 580 (SLSF…FNPD), 584 to 627 (KFKF…FTAS), 631 to 674 (LLKF…FDSE), 680 to 722 (QIVF…IDPD), and 727 to 770 (LSVK…FNQN).

As to quaternary structure, interacts with the head domain of rhea and the kinase domain of Ilk. Interacts with AGO1. Interacts with mei-P26. As to expression, expressed in ovarian germline stem cells (at protein level). Expressed ubiquitously in all epithelial cells during early stages of embryogenesis. Specifically expressed at epidermal muscle attachment site.

Functionally, vital for larval development. Plays a role in tumor formation. A crucial component for the physical link between integrins and the cytoskeleton in the epidermal muscle attachment sites. In Drosophila melanogaster (Fruit fly), this protein is Protein wech (wech).